The sequence spans 139 residues: Large ribosomal subunit protein bL21 (139 aa).

The protein belongs to the bacterial ribosomal protein bL21 family. Part of the 50S ribosomal subunit. Contacts protein L20.

Functionally, this protein binds to 23S rRNA in the presence of protein L20. The sequence is that of Large ribosomal subunit protein bL21 from Prochlorococcus marinus (strain NATL1A).